A 307-amino-acid chain; its full sequence is N-acetylmuramic acid 6-phosphate etherase (307 aa).

One can recognise an SIS domain in the interval 60–223; it reads AAQAIARGGR…STGAMVRIGK (164 aa). Residue E88 is the Proton donor of the active site. E119 is an active-site residue.

Belongs to the GCKR-like family. MurNAc-6-P etherase subfamily. In terms of assembly, homodimer.

It catalyses the reaction N-acetyl-D-muramate 6-phosphate + H2O = N-acetyl-D-glucosamine 6-phosphate + (R)-lactate. It functions in the pathway amino-sugar metabolism; N-acetylmuramate degradation. Its function is as follows. Specifically catalyzes the cleavage of the D-lactyl ether substituent of MurNAc 6-phosphate, producing GlcNAc 6-phosphate and D-lactate. The chain is N-acetylmuramic acid 6-phosphate etherase from Synechococcus elongatus (strain ATCC 33912 / PCC 7942 / FACHB-805) (Anacystis nidulans R2).